Here is a 201-residue protein sequence, read N- to C-terminus: Peptide deformylase (201 aa).

Polar residues predominate over residues 1 to 17 (MANNFSQLARKSKTNSP). Residues 1–24 (MANNFSQLARKSKTNSPIEKVSKE) form a disordered region. Cys-121 and His-163 together coordinate Fe cation. Glu-164 is an active-site residue. His-167 serves as a coordination point for Fe cation.

It belongs to the polypeptide deformylase family. Fe(2+) is required as a cofactor.

The catalysed reaction is N-terminal N-formyl-L-methionyl-[peptide] + H2O = N-terminal L-methionyl-[peptide] + formate. Removes the formyl group from the N-terminal Met of newly synthesized proteins. Requires at least a dipeptide for an efficient rate of reaction. N-terminal L-methionine is a prerequisite for activity but the enzyme has broad specificity at other positions. The sequence is that of Peptide deformylase from Prochlorococcus marinus subsp. pastoris (strain CCMP1986 / NIES-2087 / MED4).